Consider the following 453-residue polypeptide: Gamma-aminobutyric acid receptor subunit alpha-6 (453 aa).

The N-terminal stretch at 1–19 (MASSLPWLCIILWLENALG) is a signal peptide. Over 20–243 (KLEVEGNFYS…FHLQRKMGYF (224 aa)) the chain is Extracellular. N31 carries N-linked (GlcNAc...) asparagine glycosylation. R84 contacts 4-aminobutanoate. N128 and N141 each carry an N-linked (GlcNAc...) asparagine glycan. 4-aminobutanoate is bound at residue T147. The cysteines at positions 156 and 170 are disulfide-linked. The chain crosses the membrane as a helical span at residues 244–264 (MIQIYTPCIMTVILSQVSFWI). The Cytoplasmic segment spans residues 265 to 270 (NKESVP). Residues 271 to 290 (ARTVFGITTVLTMTTLSISA) traverse the membrane as a helical segment. At 291 to 304 (RHSLPKVSYATAMD) the chain is on the extracellular side. The helical transmembrane segment at 305 to 325 (WFIAVCFAFVFSALIEFAAVN) threads the bilayer. Over 326 to 422 (YFTNLQTQKA…GTSKIDQYSR (97 aa)) the chain is Cytoplasmic. Phosphothreonine is present on T403. The helical transmembrane segment at 423–443 (ILFPVAFAGFNLVYWVVYLSK) threads the bilayer. Over 444-453 (DTMEVSSSVE) the chain is Extracellular.

Belongs to the ligand-gated ion channel (TC 1.A.9) family. Gamma-aminobutyric acid receptor (TC 1.A.9.5) subfamily. GABRA6 sub-subfamily. In terms of assembly, heteropentamer, formed by a combination of alpha (GABRA1-6), beta (GABRB1-3), gamma (GABRG1-3), delta (GABRD), epsilon (GABRE), rho (GABRR1-3), pi (GABRP) and theta (GABRQ) chains, each subunit exhibiting distinct physiological and pharmacological properties. Binds UBQLN1. As to expression, expressed in brain, in cerebellar granule cells.

It localises to the postsynaptic cell membrane. It is found in the cell membrane. The enzyme catalyses chloride(in) = chloride(out). In terms of biological role, alpha subunit of the heteropentameric ligand-gated chloride channel gated by gamma-aminobutyric acid (GABA), a major inhibitory neurotransmitter in the brain. GABA-gated chloride channels, also named GABA(A) receptors (GABAAR), consist of five subunits arranged around a central pore and contain GABA active binding site(s) located at the alpha and beta subunit interface(s). When activated by GABA, GABAARs selectively allow the flow of chloride anions across the cell membrane down their electrochemical gradient. Alpha-6/GABRA6 subunits are found at both synaptic and extrasynaptic sites. Chloride influx into the postsynaptic neuron following GABAAR opening decreases the neuron ability to generate a new action potential, thereby reducing nerve transmission. Extrasynaptic alpha-6-containing receptors contribute to the tonic GABAergic inhibition. Alpha-6 subunits are also present on glutamatergic synapses. The chain is Gamma-aminobutyric acid receptor subunit alpha-6 from Homo sapiens (Human).